Reading from the N-terminus, the 697-residue chain is Semaphorin-2A (697 aa).

The N-terminal stretch at 1–20 (MAAKLWNLLLVAASVHLVGS) is a signal peptide. Residues 21-493 (VEQLHQDLIH…SDNIVRQIEL (473 aa)) form the Sema domain. Residues asparagine 63 and asparagine 66 are each glycosylated (N-linked (GlcNAc...) asparagine). A disulfide bond links cysteine 87 and cysteine 98. Asparagine 132, asparagine 198, and asparagine 283 each carry an N-linked (GlcNAc...) asparagine glycan. 2 disulfides stabilise this stretch: cysteine 260–cysteine 367 and cysteine 284–cysteine 326. A glycan (N-linked (GlcNAc...) asparagine) is linked at asparagine 369. Intrachain disulfides connect cysteine 496-cysteine 512 and cysteine 506-cysteine 521. An Ig-like C2-type domain is found at 526-634 (PGLLQDVTNT…LCSYNITVDA (109 aa)). N-linked (GlcNAc...) asparagine glycans are attached at residues asparagine 534, asparagine 629, and asparagine 679. Residues cysteine 618 and cysteine 654 are joined by a disulfide bond. Residues 673–685 (QCSTKQNNSNQKT) are compositionally biased toward polar residues. The disordered stretch occupies residues 673–697 (QCSTKQNNSNQKTHPNDIFHSNPVA).

Belongs to the semaphorin family. In terms of tissue distribution, expressed in a gradient in the developing limb bud epithelium during Ti pioneer axon outgrowth.

The protein resides in the secreted. Its function is as follows. Acts as a chemorepulsive guidance molecule critical for axon fasciculation and for determining both the initial direction and subsequent pathfinding events of the Ti axon projection. This chain is Semaphorin-2A (SEMA-2A), found in Schistocerca gregaria (Desert locust).